Consider the following 249-residue polypeptide: uncharacterized protein (249 aa).

It belongs to the chlamydial CPn_0206/CT203/TC_0475 family.

This is an uncharacterized protein from Chlamydia muridarum (strain MoPn / Nigg).